Consider the following 138-residue polypeptide: Transcription factor Atoh7-a (138 aa).

Positions 33–85 constitute a bHLH domain; that stretch reads KRRLAANARERRRMQGLNTAFDSLRKVVPQWGEDKQLSKYETLQMALSYIMAL.

The protein localises to the nucleus. It is found in the perikaryon. The protein resides in the cell projection. It localises to the axon. Functionally, transcription factor that binds to DNA at the consensus sequence 5'-CAG[GC]TG-3'. Positively regulates the determination of retinal ganglion cell fate and formation of the optic nerve and retino-hypothalamic tract. Required for retinal circadian rhythm photoentrainment. Plays a role in brainstem auditory signaling and binaural processing. Regulates the differentiation of olfactory receptor neurons. During retinal neurogenesis, activates the transcription of several genes such as brn3d, coe3, cbfa2t2, glis2, elrC and xgadd45-gamma. This is Transcription factor Atoh7-a from Xenopus laevis (African clawed frog).